A 443-amino-acid polypeptide reads, in one-letter code: Tubulin beta chain (443 aa).

GTP-binding residues include Gln11, Glu69, Ser138, Gly142, Thr143, Gly144, Asn204, and Asn226. Glu69 contributes to the Mg(2+) binding site. Residues 424-443 form a disordered region; the sequence is QYQDATAEEEGEFEEEEGEN. Positions 429–443 are enriched in acidic residues; that stretch reads TAEEEGEFEEEEGEN.

This sequence belongs to the tubulin family. In terms of assembly, dimer of alpha and beta chains. A typical microtubule is a hollow water-filled tube with an outer diameter of 25 nm and an inner diameter of 15 nM. Alpha-beta heterodimers associate head-to-tail to form protofilaments running lengthwise along the microtubule wall with the beta-tubulin subunit facing the microtubule plus end conferring a structural polarity. Microtubules usually have 13 protofilaments but different protofilament numbers can be found in some organisms and specialized cells. The cofactor is Mg(2+).

The protein localises to the cytoplasm. Its subcellular location is the cytoskeleton. Its function is as follows. Tubulin is the major constituent of microtubules, a cylinder consisting of laterally associated linear protofilaments composed of alpha- and beta-tubulin heterodimers. Microtubules grow by the addition of GTP-tubulin dimers to the microtubule end, where a stabilizing cap forms. Below the cap, tubulin dimers are in GDP-bound state, owing to GTPase activity of alpha-tubulin. This is Tubulin beta chain (BETA-TT1) from Tetrahymena pyriformis.